The chain runs to 610 residues: POU domain, class 6, transcription factor 1 (610 aa).

Residues 55–87 (SSAGAAESGGDEEGSGQSLEATEEAQLDGPVTT) form a disordered region. The region spanning 448-522 (EEAINLEEIR…VLERWLAEAE (75 aa)) is the POU-specific domain. A DNA-binding region (homeobox) is located at residues 543-602 (KRKRRTSFTPQAIEVLNTYFEKNSLPTGQEITEIAKELNYDREVVRVWFCNRRQTLKNTS).

Belongs to the POU transcription factor family. Class-6 subfamily. In terms of tissue distribution, ubiquitously expressed during embryogenesis.

It localises to the nucleus. Transcription factor that binds with high affinity to the motif 5'-TAATGARAT-3'. The protein is POU domain, class 6, transcription factor 1 (pou6f1) of Danio rerio (Zebrafish).